Here is a 455-residue protein sequence, read N- to C-terminus: Na(+)/H(+) antiporter NhaA (455 aa).

Transmembrane regions (helical) follow at residues 31–51, 83–103, 113–133, 141–161, 170–190, 198–218, 231–251, 309–329, 345–365, 383–403, and 414–434; these read ASGI…NSPW, GLMS…VLIG, FPLI…LLCV, GWGI…ILLG, VFVT…IALF, VSLL…LLGI, IWAA…LLAF, GLQP…NAGV, IGVA…FAWL, IFGA…IASL, and SKIG…VVLW.

This sequence belongs to the NhaA Na(+)/H(+) (TC 2.A.33) antiporter family.

Its subcellular location is the cell inner membrane. The catalysed reaction is Na(+)(in) + 2 H(+)(out) = Na(+)(out) + 2 H(+)(in). In terms of biological role, na(+)/H(+) antiporter that extrudes sodium in exchange for external protons. In Koribacter versatilis (strain Ellin345), this protein is Na(+)/H(+) antiporter NhaA.